The sequence spans 617 residues: Probable Xaa-Pro aminopeptidase P (617 aa).

Mn(2+) is bound by residues D414, D425, E523, and E537.

Belongs to the peptidase M24B family. It depends on Mn(2+) as a cofactor.

The enzyme catalyses Release of any N-terminal amino acid, including proline, that is linked to proline, even from a dipeptide or tripeptide.. Functionally, catalyzes the removal of a penultimate prolyl residue from the N-termini of peptides. In Ajellomyces dermatitidis (strain ER-3 / ATCC MYA-2586) (Blastomyces dermatitidis), this protein is Probable Xaa-Pro aminopeptidase P (AMPP).